The chain runs to 707 residues: Choline transporter-like protein 4 (707 aa).

The Cytoplasmic segment spans residues 1-27; sequence MASEEYGEPAKHDPSFKGPIKKRGCTD. The helical transmembrane segment at 28–48 threads the bilayer; sequence IICCVLFMVFLLGYMVVGILA. Topologically, residues 49–225 are extracellular; the sequence is WLYGDPRQVI…KIFEDFAKSW (177 aa). Residues asparagine 62, asparagine 140, asparagine 176, asparagine 191, and asparagine 196 are each glycosylated (N-linked (GlcNAc...) asparagine). Residues 226–246 form a helical membrane-spanning segment; that stretch reads PWIITALVIAMVVSLLFLILL. Over 247–249 the chain is Cytoplasmic; it reads RFT. A helical membrane pass occupies residues 250–270; the sequence is AGILVWVLIVGVIGVIGYGIY. Residues 271–305 lie on the Extracellular side of the membrane; sequence HCYMEYDTLNKQGVSVSDVGFTFNLGVYFRVKETW. The chain crosses the membrane as a helical span at residues 306 to 326; it reads LAILIVLAVVEAILLLVLLFL. Residues 327-354 are Cytoplasmic-facing; it reads RKRILIAIALIKEASKAIGHIMSSLFYP. A helical membrane pass occupies residues 355–375; that stretch reads LVTFVLLVVCVAYWGMTALYL. Residues 376 to 442 lie on the Extracellular side of the membrane; that stretch reads ATSGAPIYRI…TNLFNLQIYN (67 aa). N-linked (GlcNAc...) asparagine glycans are attached at residues asparagine 389, asparagine 397, and asparagine 401. A helical transmembrane segment spans residues 443-463; it reads VIGFLWCINFVIALGQCVLAG. Residues 464 to 494 are Cytoplasmic-facing; it reads AFASYYWAFHKPKDIPFFPVAESFMRTLRYH. The helical transmembrane segment at 495–515 threads the bilayer; sequence TGSLAFGSLILTIVQLIRIIL. The Extracellular segment spans residues 516-556; sequence EYVDHKLKGAQNPCTRFLLCCLKCCFWCLEKFIKFLNRNAY. Residues 557–577 traverse the membrane as a helical segment; it reads IMIAVYGKNFCVSAKNAFKLL. The Cytoplasmic portion of the chain corresponds to 578-593; sequence MRNIVRVVVLDKVTDL. The chain crosses the membrane as a helical span at residues 594-614; the sequence is LIFFGKLIVVGGVGVLAFFFF. Residues 615 to 633 lie on the Extracellular side of the membrane; the sequence is SGRIPIPNDSFKSPTLNYY. N-linked (GlcNAc...) asparagine glycosylation is present at asparagine 622. Residues 634–654 traverse the membrane as a helical segment; the sequence is WIPIITVVLGSYMIAHGFFSV. The Cytoplasmic segment spans residues 655–707; it reads YNMCVDTLFLCFLEDLERNDGSQEKPYYMSKSLMSILNKKNRPPKSEEKKKKK.

This sequence belongs to the CTL (choline transporter-like) family.

It is found in the membrane. The protein resides in the apical cell membrane. It catalyses the reaction choline(out) + n H(+)(in) = choline(in) + n H(+)(out). It carries out the reaction thiamine diphosphate(out) = thiamine diphosphate(in). Its function is as follows. Choline transporter that seems to play a role in the choline-acetylcholine system and is required to the efferent innervation of hair cells in the olivocochlear bundle for the maintenance of physiological function of outer hair cells and the protection of hair cells from acoustic injury. Also described as a thiamine pyrophosphate transporter. Functionally, also described as a thiamine pyrophosphate transporter. The chain is Choline transporter-like protein 4 (slc44a4) from Xenopus laevis (African clawed frog).